Here is a 415-residue protein sequence, read N- to C-terminus: Serine hydroxymethyltransferase (415 aa).

(6S)-5,6,7,8-tetrahydrofolate is bound by residues leucine 117 and glycine 121 to leucine 123. Lysine 226 bears the N6-(pyridoxal phosphate)lysine mark. Glutamate 241 is a binding site for (6S)-5,6,7,8-tetrahydrofolate.

Belongs to the SHMT family. Homodimer. Pyridoxal 5'-phosphate serves as cofactor.

It is found in the cytoplasm. The catalysed reaction is (6R)-5,10-methylene-5,6,7,8-tetrahydrofolate + glycine + H2O = (6S)-5,6,7,8-tetrahydrofolate + L-serine. Its pathway is one-carbon metabolism; tetrahydrofolate interconversion. The protein operates within amino-acid biosynthesis; glycine biosynthesis; glycine from L-serine: step 1/1. Catalyzes the reversible interconversion of serine and glycine with tetrahydrofolate (THF) serving as the one-carbon carrier. This reaction serves as the major source of one-carbon groups required for the biosynthesis of purines, thymidylate, methionine, and other important biomolecules. Also exhibits THF-independent aldolase activity toward beta-hydroxyamino acids, producing glycine and aldehydes, via a retro-aldol mechanism. The sequence is that of Serine hydroxymethyltransferase from Bacillus subtilis (strain 168).